Here is a 520-residue protein sequence, read N- to C-terminus: T-box transcription factor TBX22 (520 aa).

Residues 1-91 form a disordered region; sequence MALSSRARAF…NSSESLEEKD (91 aa). Basic and acidic residues predominate over residues 33-49; that stretch reads PELREKKGGEEEEERRS. The span at 67 to 84 shows a compositional bias: low complexity; the sequence is STSASSGCGSDSGYGNSS. Positions 96 to 283 form a DNA-binding region, T-box; sequence LQGSELWKRF…RNPFAKGFRD (188 aa).

In terms of tissue distribution, seems to be expressed at a low level.

Its subcellular location is the nucleus. Probable transcriptional regulator involved in developmental processes. This is major determinant crucial to palatogenesis. The protein is T-box transcription factor TBX22 (TBX22) of Homo sapiens (Human).